We begin with the raw amino-acid sequence, 125 residues long: Large ribosomal subunit protein bL12 (125 aa).

The protein belongs to the bacterial ribosomal protein bL12 family. In terms of assembly, homodimer. Part of the ribosomal stalk of the 50S ribosomal subunit. Forms a multimeric L10(L12)X complex, where L10 forms an elongated spine to which 2 to 4 L12 dimers bind in a sequential fashion. Binds GTP-bound translation factors.

Functionally, forms part of the ribosomal stalk which helps the ribosome interact with GTP-bound translation factors. Is thus essential for accurate translation. This Francisella tularensis subsp. novicida (strain U112) protein is Large ribosomal subunit protein bL12.